A 120-amino-acid polypeptide reads, in one-letter code: Large ribosomal subunit protein uL18 (120 aa).

Positions 1–25 (MKQTRTAARQSRHQRIRRKVKGTSD) are disordered. A compositionally biased stretch (basic residues) spans 10-21 (QSRHQRIRRKVK).

It belongs to the universal ribosomal protein uL18 family. In terms of assembly, part of the 50S ribosomal subunit; part of the 5S rRNA/L5/L18/L25 subcomplex. Contacts the 5S and 23S rRNAs.

This is one of the proteins that bind and probably mediate the attachment of the 5S RNA into the large ribosomal subunit, where it forms part of the central protuberance. In Thermosynechococcus vestitus (strain NIES-2133 / IAM M-273 / BP-1), this protein is Large ribosomal subunit protein uL18.